Reading from the N-terminus, the 296-residue chain is Acetylglutamate kinase (296 aa).

Residues 69–70 (GG), arginine 91, and asparagine 192 contribute to the substrate site.

It belongs to the acetylglutamate kinase family. ArgB subfamily.

It localises to the cytoplasm. The enzyme catalyses N-acetyl-L-glutamate + ATP = N-acetyl-L-glutamyl 5-phosphate + ADP. The protein operates within amino-acid biosynthesis; L-arginine biosynthesis; N(2)-acetyl-L-ornithine from L-glutamate: step 2/4. Its function is as follows. Catalyzes the ATP-dependent phosphorylation of N-acetyl-L-glutamate. The polypeptide is Acetylglutamate kinase (Ruthia magnifica subsp. Calyptogena magnifica).